The chain runs to 102 residues: DET1- and DDB1-associated protein 1 (102 aa).

Ala2 carries the N-acetylalanine modification. Residue Ser33 is modified to Phosphoserine. Composition is skewed to basic and acidic residues over residues 66–75 and 91–102; these read KNAAKKRDQE and ARTDSPDMHEDT. The segment at 66–102 is disordered; the sequence is KNAAKKRDQEQVELEGESSAPPRKVARTDSPDMHEDT. Ser95 is modified (phosphoserine).

It belongs to the DDA1 family. Component of numerous DCX (DDB1-CUL4-X-box) E3 ubiquitin-protein ligase complexes which consist of a core of DDB1, cullin-4 (CUL4A or CUL4B), DDA1 and RBX1. Component of the DCX(DCAF15) complex, also named CLR4(DCAF15) complex, composed of DCAF15, DDB1, cullin-4 (CUL4A or CUL4B), DDA1 and RBX1. Part of the DDD core complex containing DET1, DDA1 and DDB1; the DDD core complex recruits a specific UBE2E enzyme, such as UBE2E1, UBE2E2 UBE2E3, to form specific DDD-E2 complexes.

It functions in the pathway protein modification; protein ubiquitination. In terms of biological role, functions as a component of numerous distinct DCX (DDB1-CUL4-X-box) E3 ubiquitin-protein ligase complexes which mediate the ubiquitination and subsequent proteasomal degradation of target proteins. In the DCX complexes, acts as a scaffolding subunit required to stabilize the complex. In Bos taurus (Bovine), this protein is DET1- and DDB1-associated protein 1.